The following is a 362-amino-acid chain: tRNA-specific 2-thiouridylase MnmA 1 (362 aa).

ATP contacts are provided by residues 29–36 and Met55; that span reads AMSGGVDS. Residue Cys109 is the Nucleophile of the active site. The cysteines at positions 109 and 201 are disulfide-linked. Residue Gly133 coordinates ATP. Residues 151 to 153 are interaction with tRNA; that stretch reads KDQ. Cys201 acts as the Cysteine persulfide intermediate in catalysis.

Belongs to the MnmA/TRMU family.

It is found in the cytoplasm. It catalyses the reaction S-sulfanyl-L-cysteinyl-[protein] + uridine(34) in tRNA + AH2 + ATP = 2-thiouridine(34) in tRNA + L-cysteinyl-[protein] + A + AMP + diphosphate + H(+). In terms of biological role, catalyzes the 2-thiolation of uridine at the wobble position (U34) of tRNA, leading to the formation of s(2)U34. The sequence is that of tRNA-specific 2-thiouridylase MnmA 1 from Fusobacterium nucleatum subsp. nucleatum (strain ATCC 25586 / DSM 15643 / BCRC 10681 / CIP 101130 / JCM 8532 / KCTC 2640 / LMG 13131 / VPI 4355).